The chain runs to 131 residues: Secreted RxLR effector protein 45 (131 aa).

A signal peptide spans 1–16 (MSIFIFISLVLGLAHQ). Positions 56–59 (RPLR) match the RxLR motif. Asn-128 is a glycosylation site (N-linked (GlcNAc...) asparagine).

It belongs to the RxLR effector family.

Its subcellular location is the secreted. The protein localises to the host nucleus. Functionally, secreted effector that completely suppresses the host cell death induced by cell death-inducing proteins. This is Secreted RxLR effector protein 45 from Plasmopara viticola (Downy mildew of grapevine).